Reading from the N-terminus, the 197-residue chain is Gastrula zinc finger protein XlCGF17.1 (197 aa).

7 C2H2-type zinc fingers span residues 6–28, 34–56, 62–84, 90–112, 118–140, 146–169, and 175–197; these read ISCS…QMTH, YSCS…QKIH, FSCS…HRTH, FFCS…RRTH, FSCS…YRTH, FSCS…RRSH, and FSCS…LRTH.

The protein belongs to the krueppel C2H2-type zinc-finger protein family.

It localises to the nucleus. Functionally, may be involved in transcriptional regulation. The sequence is that of Gastrula zinc finger protein XlCGF17.1 from Xenopus laevis (African clawed frog).